The sequence spans 500 residues: Protein adenylyltransferase Fic (500 aa).

Residues 39–59 (LSFLIFFVIGSLFSGLMFALL) traverse the membrane as a helical segment. TPR repeat units lie at residues 122 to 155 (ALSSLKVAVEMKLMGKDDKALRLFQHAMALSPRH) and 156 to 190 (PEILTKYGEFLEHSQQDIVTADHYYYQALTVNPSH). The Inhibitory (S/T)XXXE(G/N) motif motif lies at 247–252 (SVGIEG). Residues Glu-251 and 333–336 (VGGH) contribute to the ATP site. A Fido domain is found at 302–437 (ITLKDLLEIH…IRPFVRFIAD (136 aa)). His-380 is a catalytic residue. ATP contacts are provided by residues 384–391 (DGNGRTSR), 416–417 (YY), and Asn-424. The segment at 477 to 500 (GREGGSTVHEGSGTGDSIRIGTMW) is disordered.

Belongs to the fic family. In terms of assembly, homodimer.

Its subcellular location is the membrane. The catalysed reaction is L-tyrosyl-[protein] + ATP = O-(5'-adenylyl)-L-tyrosyl-[protein] + diphosphate. It catalyses the reaction L-threonyl-[protein] + ATP = 3-O-(5'-adenylyl)-L-threonyl-[protein] + diphosphate. It carries out the reaction 3-O-(5'-adenylyl)-L-threonyl-[protein] + H2O = L-threonyl-[protein] + AMP + H(+). Its activity is regulated as follows. The side chain of Glu-251 determines which of the two opposing activities (AMPylase or de-AMPylase) will take place. In response to endoplasmic reticulum stress, mediates de-AMPylase activity. Adenylyltransferase activity is inhibited by the inhibitory helix present at the N-terminus: Glu-251 binds ATP and competes with ATP-binding at Arg-391, thereby preventing adenylyltransferase activity. In unstressed cells, disengagement of Glu-251 promotes adenylyltransferase activity. Activation dissociates ATP-binding from Glu-251, allowing ordered binding of the entire ATP moiety with the alpha-phosphate in an orientation that is productive for accepting an incoming target hydroxyl side chain. In terms of biological role, protein that can both mediate the addition of adenosine 5'-monophosphate (AMP) to specific residues of target proteins (AMPylation), and the removal of the same modification from target proteins (de-AMPylation), depending on the context. The side chain of Glu-251 determines which of the two opposing activities (AMPylase or de-AMPylase) will take place. Acts as a key regulator of the unfolded protein response (UPR) by mediating AMPylation or de-AMPylation of Hsc70-3/BiP. In unstressed cells, acts as an adenylyltransferase by mediating AMPylation of Hsc70-3/BiP at 'Thr-518', thereby inactivating it. In response to endoplasmic reticulum stress, acts as a phosphodiesterase by mediating removal of ATP (de-AMPylation) from Hsc70-3/BiP at 'Thr-518', leading to restore HSPA5/BiP activity. The protein is Protein adenylyltransferase Fic of Culex quinquefasciatus (Southern house mosquito).